Here is a 665-residue protein sequence, read N- to C-terminus: Probable potassium transport system protein Kup (665 aa).

Helical transmembrane passes span 15–35 (SFLIALGVVYGDIGTSPLYVM), 48–68 (ITPDFILGVLSLIFWTMTLLT), 100–120 (WLIIPAMVGGSALLADGMLTP), 147–167 (IIIIIVLVILSFLFFIQHFGT), 173–193 (IFGPVMFIWFAFLAILGIVNL), 219–239 (LGFFILGGVFLSTTGAEALYS), 251–271 (LTWPLVKICLLLNYFGQAAWI), 292–312 (MMPSWLLLFGVLISTLAAIIA), 348–368 (IYMPAINRILWIACIAIVLYF), 378–398 (YGLSITVTMLMTSILLFNYLL), 403–423 (PLPIALIILVFFGSLEFSFLI), and 431–451 (KGGFVSVLIALCILSIMYIWI).

It belongs to the HAK/KUP transporter (TC 2.A.72) family.

It localises to the cell membrane. The enzyme catalyses K(+)(in) + H(+)(in) = K(+)(out) + H(+)(out). Its function is as follows. Transport of potassium into the cell. Likely operates as a K(+):H(+) symporter. The polypeptide is Probable potassium transport system protein Kup (Clostridium perfringens (strain ATCC 13124 / DSM 756 / JCM 1290 / NCIMB 6125 / NCTC 8237 / Type A)).